The sequence spans 334 residues: Probable type II restriction enzyme HindVP (334 aa).

It carries out the reaction Endonucleolytic cleavage of DNA to give specific double-stranded fragments with terminal 5'-phosphates.. Its function is as follows. A P subtype restriction enzyme that recognizes the double-stranded sequence 5'-GRCGYC-3'; the cleavage site is unknown. This chain is Probable type II restriction enzyme HindVP (hindVRP), found in Haemophilus influenzae (strain ATCC 51907 / DSM 11121 / KW20 / Rd).